The primary structure comprises 438 residues: Glycerol-3-phosphate acyltransferase 3 (438 aa).

A helical membrane pass occupies residues 14–34 (WLTLVGGLILLPSAFGLSLGI). Serine 68 and serine 77 each carry phosphoserine. Helical transmembrane passes span 137-157 (ISPRLTMVWVLGVLVRYCFLL) and 161-181 (VTLAFIGISLLIIGTTLVGQL). The short motif at 229 to 234 (HTSPID) is the HXXXXD motif element.

It belongs to the 1-acyl-sn-glycerol-3-phosphate acyltransferase family. In terms of tissue distribution, most abundant in epididymal fat, followed by small intestine, brown adipose tissue, kidney, heart and colon.

The protein localises to the endoplasmic reticulum membrane. The enzyme catalyses sn-glycerol 3-phosphate + an acyl-CoA = a 1-acyl-sn-glycero-3-phosphate + CoA. The catalysed reaction is a 1-acyl-sn-glycero-3-phosphate + an acyl-CoA = a 1,2-diacyl-sn-glycero-3-phosphate + CoA. It carries out the reaction dodecanoyl-CoA + sn-glycerol 3-phosphate = 1-dodecanoyl-sn-glycerol 3-phosphate + CoA. It catalyses the reaction sn-glycerol 3-phosphate + hexadecanoyl-CoA = 1-hexadecanoyl-sn-glycero-3-phosphate + CoA. The enzyme catalyses sn-glycerol 3-phosphate + (9Z)-octadecenoyl-CoA = 1-(9Z-octadecenoyl)-sn-glycero-3-phosphate + CoA. The catalysed reaction is (9Z,12Z)-octadecadienoyl-CoA + sn-glycerol 3-phosphate = 1-(9Z,12Z)-octadecadienoyl-sn-glycero-3-phosphate + CoA. It carries out the reaction 1-tetradecanoyl-sn-glycerol 3-phosphate + (9Z)-octadecenoyl-CoA = 1-tetradecanoyl-2-(9Z)-octadecenoyl-sn-glycero-3-phosphate + CoA. It catalyses the reaction 1-hexadecanoyl-sn-glycero-3-phosphate + (9Z)-octadecenoyl-CoA = 1-hexadecanoyl-2-(9Z-octadecenoyl)-sn-glycero-3-phosphate + CoA. The enzyme catalyses 1-(9Z-octadecenoyl)-sn-glycero-3-phosphate + (9Z)-octadecenoyl-CoA = 1,2-di-(9Z-octadecenoyl)-sn-glycero-3-phosphate + CoA. The catalysed reaction is 1-(6Z,9Z,12Z-octadecatrienoyl)-sn-glycero-3-phosphate + (9Z)-octadecenoyl-CoA = (6Z,9Z,12Z)-octadecatrienoyl-2-(9Z)-octadecenoyl-sn-glycero-3-phosphate + CoA. It carries out the reaction 1-(9Z,12Z,15Z)-octadecatrienoyl-sn-glycero-3-phosphate + (9Z)-octadecenoyl-CoA = 1-(9Z,12Z,15Z)-octadecatrienoyl-2-(9Z)-octadecenoyl-sn-glycero-3-phosphate + CoA. It catalyses the reaction 1-(9Z-octadecenoyl)-sn-glycero-3-phosphate + tetradecanoyl-CoA = 1-(9Z)-octadecenoyl-2-tetradecanoyl-sn-glycero-3-phosphate + CoA. The enzyme catalyses 1-(9Z-octadecenoyl)-sn-glycero-3-phosphate + hexadecanoyl-CoA = 1-(9Z)-octadecenoyl-2-hexadecanoyl-sn-glycero-3-phosphate + CoA. The catalysed reaction is 1-(9Z-octadecenoyl)-sn-glycero-3-phosphate + octadecanoyl-CoA = 1-(9Z-octadecenoyl)-2-octadecanoyl-sn-glycero-3-phosphate + CoA. It carries out the reaction 1-(9Z-octadecenoyl)-sn-glycero-3-phosphate + (9Z,12Z)-octadecadienoyl-CoA = 1-(9Z)-octadecenoyl-2-(9Z,12Z)-octadecadienoyl-sn-glycero-3-phosphate + CoA. It catalyses the reaction 1-(5Z,8Z,11Z,14Z-eicosatetraenoyl)-sn-glycero-3-phosphate + (9Z)-octadecenoyl-CoA = 1-(5Z,8Z,11Z,14Z)-eicosatetraenoyl-2-(9Z)-octadecenoyl-sn-glycero-3-phosphate + CoA. The protein operates within glycerolipid metabolism; triacylglycerol biosynthesis. Its pathway is phospholipid metabolism; CDP-diacylglycerol biosynthesis; CDP-diacylglycerol from sn-glycerol 3-phosphate: step 1/3. Functionally, converts glycerol-3-phosphate to 1-acyl-sn-glycerol-3-phosphate (lysophosphatidic acid or LPA) by incorporating an acyl moiety at the sn-1 position of the glycerol backbone. Also converts LPA into 1,2-diacyl-sn-glycerol-3-phosphate (phosphatidic acid or PA) by incorporating an acyl moiety at the sn-2 position of the glycerol backbone. Protects cells against lipotoxicity. The chain is Glycerol-3-phosphate acyltransferase 3 from Mus musculus (Mouse).